The sequence spans 344 residues: Dihydroorotase (344 aa).

Zn(2+)-binding residues include H14 and H16. Substrate contacts are provided by residues 16-18 and N42; that span reads HLR. The Zn(2+) site is built by K100, H137, and H175. K100 carries the post-translational modification N6-carboxylysine. H137 lines the substrate pocket. L220 contacts substrate. Residue D248 participates in Zn(2+) binding. D248 is a catalytic residue. Residues H252 and A264 each contribute to the substrate site.

Belongs to the metallo-dependent hydrolases superfamily. DHOase family. Class II DHOase subfamily. Homodimer. The cofactor is Zn(2+).

The catalysed reaction is (S)-dihydroorotate + H2O = N-carbamoyl-L-aspartate + H(+). Its pathway is pyrimidine metabolism; UMP biosynthesis via de novo pathway; (S)-dihydroorotate from bicarbonate: step 3/3. In terms of biological role, catalyzes the reversible cyclization of carbamoyl aspartate to dihydroorotate. The polypeptide is Dihydroorotase (Cupriavidus pinatubonensis (strain JMP 134 / LMG 1197) (Cupriavidus necator (strain JMP 134))).